We begin with the raw amino-acid sequence, 119 residues long: uncharacterized protein (119 aa).

This is an uncharacterized protein from Methanocaldococcus jannaschii (strain ATCC 43067 / DSM 2661 / JAL-1 / JCM 10045 / NBRC 100440) (Methanococcus jannaschii).